Reading from the N-terminus, the 421-residue chain is Tyrosine--tRNA ligase 1 (421 aa).

An L-tyrosine-binding site is contributed by Tyr-35. Positions 40–49 match the 'HIGH' region motif; the sequence is PTADSLHIGH. L-tyrosine contacts are provided by Tyr-170 and Gln-174. Residues 231–235 carry the 'KMSKS' region motif; it reads KFGKT. Position 234 (Lys-234) interacts with ATP. The region spanning 354–420 is the S4 RNA-binding domain; that stretch reads LPLVEILVQS…GKKKYFLLTY (67 aa).

This sequence belongs to the class-I aminoacyl-tRNA synthetase family. TyrS type 1 subfamily. As to quaternary structure, homodimer.

It localises to the cytoplasm. The enzyme catalyses tRNA(Tyr) + L-tyrosine + ATP = L-tyrosyl-tRNA(Tyr) + AMP + diphosphate + H(+). In terms of biological role, catalyzes the attachment of tyrosine to tRNA(Tyr) in a two-step reaction: tyrosine is first activated by ATP to form Tyr-AMP and then transferred to the acceptor end of tRNA(Tyr). This chain is Tyrosine--tRNA ligase 1, found in Bacillus licheniformis (strain ATCC 14580 / DSM 13 / JCM 2505 / CCUG 7422 / NBRC 12200 / NCIMB 9375 / NCTC 10341 / NRRL NRS-1264 / Gibson 46).